A 343-amino-acid chain; its full sequence is Aspartate-semialdehyde dehydrogenase (343 aa).

Residues 13–16 (TGAV) and 41–42 (KS) each bind NADP(+). Arginine 103 is a phosphate binding site. Cysteine 134 serves as the catalytic Acyl-thioester intermediate. Residue glutamine 161 coordinates substrate. Residue 164 to 165 (SG) coordinates NADP(+). Position 220 (lysine 220) interacts with phosphate. Substrate is bound at residue arginine 241. Histidine 248 acts as the Proton acceptor in catalysis. An NADP(+)-binding site is contributed by glutamine 321.

The protein belongs to the aspartate-semialdehyde dehydrogenase family. Homodimer.

The catalysed reaction is L-aspartate 4-semialdehyde + phosphate + NADP(+) = 4-phospho-L-aspartate + NADPH + H(+). It participates in amino-acid biosynthesis; L-lysine biosynthesis via DAP pathway; (S)-tetrahydrodipicolinate from L-aspartate: step 2/4. It functions in the pathway amino-acid biosynthesis; L-methionine biosynthesis via de novo pathway; L-homoserine from L-aspartate: step 2/3. The protein operates within amino-acid biosynthesis; L-threonine biosynthesis; L-threonine from L-aspartate: step 2/5. Catalyzes the NADPH-dependent formation of L-aspartate-semialdehyde (L-ASA) by the reductive dephosphorylation of L-aspartyl-4-phosphate. This chain is Aspartate-semialdehyde dehydrogenase, found in Campylobacter jejuni subsp. jejuni serotype O:2 (strain ATCC 700819 / NCTC 11168).